The chain runs to 273 residues: SPRY domain-containing SOCS box protein 4 (273 aa).

The region spanning 34–233 is the B30.2/SPRY domain; that stretch reads PARLDQLLDM…MRYINGLDPE (200 aa). An SOCS box domain is found at 234-273; sequence PLPLMDLCRRSIRSALGRQRLRDIGSLPLPQSLKNYLQYQ.

The protein belongs to the SPSB family. Component of the probable ECS(SPSB4) E3 ubiquitin-protein ligase complex which contains CUL5, RNF7/RBX2, Elongin BC complex and SPSB4. Interacts with CUL5; RNF7; ELOB and ELOC. Interacts with MET. Interacts (via B30.2/SPRY domain) with PAWR; this interaction occurs in association with the Elongin BC complex. Interacts with NOS2. Interacts with EPHB2.

It localises to the cytoplasm. The protein localises to the cytosol. Its pathway is protein modification; protein ubiquitination. Functionally, substrate recognition component of a SCF-like ECS (Elongin BC-CUL2/5-SOCS-box protein) E3 ubiquitin-protein ligase complex which mediates the ubiquitination and subsequent proteasomal degradation of target proteins. Negatively regulates nitric oxide (NO) production and limits cellular toxicity in activated macrophages by mediating the ubiquitination and proteasomal degradation of NOS2. Acts as a bridge which links NOS2 with the ECS E3 ubiquitin ligase complex components ELOC and CUL5. Diminishes EphB2-dependent cell repulsive responses by mediating the ubiquitination and degradation of the EphB2/CTF2. Regulates cellular clock function by mediating ubiquitination and proteasomal degradation of the circadian transcriptional repressor NR1D1. This chain is SPRY domain-containing SOCS box protein 4 (Spsb4), found in Mus musculus (Mouse).